A 350-amino-acid polypeptide reads, in one-letter code: Ketol-acid reductoisomerase (NADP(+)) (350 aa).

Residues 4–187 (VSITTDYSRM…GGARANIIKT (184 aa)) enclose the KARI N-terminal Rossmann domain. NADP(+)-binding positions include 30–33 (YGSQ), Arg53, Thr58, and 88–91 (DMVQ). His113 is an active-site residue. Position 139 (Gly139) interacts with NADP(+). One can recognise a KARI C-terminal knotted domain in the interval 188–333 (TFKEETETDL…KQLRAKMVWL (146 aa)). The Mg(2+) site is built by Asp196, Glu200, Glu232, and Glu236. Ser257 provides a ligand contact to substrate.

Belongs to the ketol-acid reductoisomerase family. Requires Mg(2+) as cofactor.

It catalyses the reaction (2R)-2,3-dihydroxy-3-methylbutanoate + NADP(+) = (2S)-2-acetolactate + NADPH + H(+). It carries out the reaction (2R,3R)-2,3-dihydroxy-3-methylpentanoate + NADP(+) = (S)-2-ethyl-2-hydroxy-3-oxobutanoate + NADPH + H(+). It functions in the pathway amino-acid biosynthesis; L-isoleucine biosynthesis; L-isoleucine from 2-oxobutanoate: step 2/4. It participates in amino-acid biosynthesis; L-valine biosynthesis; L-valine from pyruvate: step 2/4. Involved in the biosynthesis of branched-chain amino acids (BCAA). Catalyzes an alkyl-migration followed by a ketol-acid reduction of (S)-2-acetolactate (S2AL) to yield (R)-2,3-dihydroxy-isovalerate. In the isomerase reaction, S2AL is rearranged via a Mg-dependent methyl migration to produce 3-hydroxy-3-methyl-2-ketobutyrate (HMKB). In the reductase reaction, this 2-ketoacid undergoes a metal-dependent reduction by NADPH to yield (R)-2,3-dihydroxy-isovalerate. The chain is Ketol-acid reductoisomerase (NADP(+)) from Xylella fastidiosa (strain Temecula1 / ATCC 700964).